A 199-amino-acid chain; its full sequence is Recombination protein RecR (199 aa).

The C4-type zinc finger occupies 56–71 (CATCGNVAQEEQCNIC). In terms of domain architecture, Toprim spans 79–174 (SVICVVEEPK…KVTRLASGLP (96 aa)).

It belongs to the RecR family.

In terms of biological role, may play a role in DNA repair. It seems to be involved in an RecBC-independent recombinational process of DNA repair. It may act with RecF and RecO. This is Recombination protein RecR from Streptomyces coelicolor (strain ATCC BAA-471 / A3(2) / M145).